The chain runs to 207 residues: Large ribosomal subunit protein uL4 (207 aa).

The interval 56 to 75 is disordered; that stretch reads EVSGTTKKPFKQKGTGNARQ.

The protein belongs to the universal ribosomal protein uL4 family. As to quaternary structure, part of the 50S ribosomal subunit.

One of the primary rRNA binding proteins, this protein initially binds near the 5'-end of the 23S rRNA. It is important during the early stages of 50S assembly. It makes multiple contacts with different domains of the 23S rRNA in the assembled 50S subunit and ribosome. Functionally, forms part of the polypeptide exit tunnel. This chain is Large ribosomal subunit protein uL4, found in Rickettsia prowazekii (strain Madrid E).